Consider the following 340-residue polypeptide: Anthranilate phosphoribosyltransferase (340 aa).

Residues glycine 81, 84-85 (GD), threonine 89, 91-94 (NIST), 109-117 (KHGNRNLSS), and alanine 121 contribute to the 5-phospho-alpha-D-ribose 1-diphosphate site. Glycine 81 contributes to the anthranilate binding site. Serine 93 contacts Mg(2+). Asparagine 112 is an anthranilate binding site. Arginine 167 provides a ligand contact to anthranilate. 2 residues coordinate Mg(2+): aspartate 226 and glutamate 227.

Belongs to the anthranilate phosphoribosyltransferase family. Homodimer. It depends on Mg(2+) as a cofactor.

The catalysed reaction is N-(5-phospho-beta-D-ribosyl)anthranilate + diphosphate = 5-phospho-alpha-D-ribose 1-diphosphate + anthranilate. It functions in the pathway amino-acid biosynthesis; L-tryptophan biosynthesis; L-tryptophan from chorismate: step 2/5. Catalyzes the transfer of the phosphoribosyl group of 5-phosphorylribose-1-pyrophosphate (PRPP) to anthranilate to yield N-(5'-phosphoribosyl)-anthranilate (PRA). In Ruegeria sp. (strain TM1040) (Silicibacter sp.), this protein is Anthranilate phosphoribosyltransferase.